Here is a 327-residue protein sequence, read N- to C-terminus: Probable cell division protein WhiA (327 aa).

A DNA-binding region (H-T-H motif) is located at residues E277–D310. The disordered stretch occupies residues D304–A327.

This sequence belongs to the WhiA family.

Involved in cell division and chromosome segregation. The polypeptide is Probable cell division protein WhiA (Mycolicibacterium vanbaalenii (strain DSM 7251 / JCM 13017 / BCRC 16820 / KCTC 9966 / NRRL B-24157 / PYR-1) (Mycobacterium vanbaalenii)).